A 193-amino-acid chain; its full sequence is 3-isopropylmalate dehydratase small subunit (193 aa).

Belongs to the LeuD family. LeuD type 1 subfamily. As to quaternary structure, heterodimer of LeuC and LeuD.

The enzyme catalyses (2R,3S)-3-isopropylmalate = (2S)-2-isopropylmalate. It participates in amino-acid biosynthesis; L-leucine biosynthesis; L-leucine from 3-methyl-2-oxobutanoate: step 2/4. Catalyzes the isomerization between 2-isopropylmalate and 3-isopropylmalate, via the formation of 2-isopropylmaleate. The protein is 3-isopropylmalate dehydratase small subunit of Bacillus thuringiensis subsp. konkukian (strain 97-27).